A 362-amino-acid polypeptide reads, in one-letter code: Transcription factor bHLH133 (362 aa).

Residues 209-258 (LQVPSSQSTLKVRKEKLGGRIASLHQLVSPFGKTDTASVLSEAIGYIRFL) form the bHLH domain.

Belongs to the bHLH protein family. In terms of assembly, homodimer.

The protein localises to the nucleus. The protein is Transcription factor bHLH133 (BHLH133) of Arabidopsis thaliana (Mouse-ear cress).